Here is a 147-residue protein sequence, read N- to C-terminus: Hemoglobin subunit beta-2 (147 aa).

Residues 3-147 (EWTDSERAII…VVSALGRQYH (145 aa)) form the Globin domain. H64 and H93 together coordinate heme b.

The protein belongs to the globin family. As to quaternary structure, hb 3 is a heterotetramer of two alpha-2 and two beta-2 chains. Red blood cells.

Functionally, involved in oxygen transport from gills to the various peripheral tissues. This Boreogadus saida (Polar cod) protein is Hemoglobin subunit beta-2 (hbb2).